The following is a 414-amino-acid chain: Dual-specificity RNA methyltransferase RlmN (414 aa).

Catalysis depends on glutamate 127, which acts as the Proton acceptor. The region spanning 133–380 (GEGRGTLCVS…SPIRMPRGRD (248 aa)) is the Radical SAM core domain. Cysteines 140 and 385 form a disulfide. Positions 147, 151, and 154 each coordinate [4Fe-4S] cluster. S-adenosyl-L-methionine-binding positions include 211 to 212 (GE), serine 243, 265 to 267 (SLH), and asparagine 342. The active-site S-methylcysteine intermediate is the cysteine 385.

Belongs to the radical SAM superfamily. RlmN family. It depends on [4Fe-4S] cluster as a cofactor.

Its subcellular location is the cytoplasm. The catalysed reaction is adenosine(2503) in 23S rRNA + 2 reduced [2Fe-2S]-[ferredoxin] + 2 S-adenosyl-L-methionine = 2-methyladenosine(2503) in 23S rRNA + 5'-deoxyadenosine + L-methionine + 2 oxidized [2Fe-2S]-[ferredoxin] + S-adenosyl-L-homocysteine. It carries out the reaction adenosine(37) in tRNA + 2 reduced [2Fe-2S]-[ferredoxin] + 2 S-adenosyl-L-methionine = 2-methyladenosine(37) in tRNA + 5'-deoxyadenosine + L-methionine + 2 oxidized [2Fe-2S]-[ferredoxin] + S-adenosyl-L-homocysteine. Specifically methylates position 2 of adenine 2503 in 23S rRNA and position 2 of adenine 37 in tRNAs. m2A2503 modification seems to play a crucial role in the proofreading step occurring at the peptidyl transferase center and thus would serve to optimize ribosomal fidelity. In Bartonella bacilliformis (strain ATCC 35685 / KC583 / Herrer 020/F12,63), this protein is Dual-specificity RNA methyltransferase RlmN.